Reading from the N-terminus, the 164-residue chain is Putative F-box protein At1g59675 (164 aa).

Positions 9 to 56 (SQSDHVPLDLTIEILSRLPAKSVGRFRSVSKLWSANTTSQNFINSFAT) constitute an F-box domain.

This Arabidopsis thaliana (Mouse-ear cress) protein is Putative F-box protein At1g59675.